The primary structure comprises 696 residues: DNA-directed RNA polymerase subunit beta' (696 aa).

Zn(2+) is bound by residues C70, C72, C85, and C88. 3 residues coordinate Mg(2+): D540, D542, and D544.

Belongs to the RNA polymerase beta' chain family. RpoC1 subfamily. In plastids the minimal PEP RNA polymerase catalytic core is composed of four subunits: alpha, beta, beta', and beta''. When a (nuclear-encoded) sigma factor is associated with the core the holoenzyme is formed, which can initiate transcription. Requires Mg(2+) as cofactor. It depends on Zn(2+) as a cofactor.

It is found in the plastid. It localises to the chloroplast. It carries out the reaction RNA(n) + a ribonucleoside 5'-triphosphate = RNA(n+1) + diphosphate. Functionally, DNA-dependent RNA polymerase catalyzes the transcription of DNA into RNA using the four ribonucleoside triphosphates as substrates. The chain is DNA-directed RNA polymerase subunit beta' from Phaeodactylum tricornutum (strain CCAP 1055/1).